We begin with the raw amino-acid sequence, 313 residues long: tRNA dimethylallyltransferase (313 aa).

11-18 (GPTASGKT) is a binding site for ATP. Residue 13 to 18 (TASGKT) coordinates substrate. Interaction with substrate tRNA stretches follow at residues 36 to 39 (DSAL), 160 to 164 (QRINR), and 241 to 246 (RCVGYR).

The protein belongs to the IPP transferase family. In terms of assembly, monomer. It depends on Mg(2+) as a cofactor.

The catalysed reaction is adenosine(37) in tRNA + dimethylallyl diphosphate = N(6)-dimethylallyladenosine(37) in tRNA + diphosphate. Its function is as follows. Catalyzes the transfer of a dimethylallyl group onto the adenine at position 37 in tRNAs that read codons beginning with uridine, leading to the formation of N6-(dimethylallyl)adenosine (i(6)A). The polypeptide is tRNA dimethylallyltransferase (Haemophilus ducreyi (strain 35000HP / ATCC 700724)).